Here is an 84-residue protein sequence, read N- to C-terminus: Large ribosomal subunit protein bL27 (84 aa).

The disordered stretch occupies residues 1–22 (MAHKKAGGSTRNGRDSESKRLG).

It belongs to the bacterial ribosomal protein bL27 family.

The chain is Large ribosomal subunit protein bL27 from Shewanella loihica (strain ATCC BAA-1088 / PV-4).